We begin with the raw amino-acid sequence, 188 residues long: MPPLTQDPQSVDARAVANLLLDKAAALDIPISNLALQKLLYFAHGRFLVDKGRPLVNGFFEAWKFGPVHPVVYRCFSANGPKYIINRAIKKDILSGLHIIVSPPRDQDIHEGIERVLLTMGRMSASQLVAVSHASGGPWDVIANGPGTNLGLGLRICDKVIKDRFRFQKVSVSVPPGLGDTLEEAPPS.

In terms of assembly, interacts with cognate toxin SocB and with ClpX.

Its function is as follows. Antitoxin component of an atypical type II toxin-antitoxin (TA) system. Unlike most type II TA systems, neutralizes the toxic activity of cognate toxin SocB by acting as an adapter to promote its degradation by ClpXP; degradation is dependent on the N-terminus of ClpX. The sequence is that of Antitoxin SocA from Caulobacter vibrioides (strain NA1000 / CB15N) (Caulobacter crescentus).